A 328-amino-acid chain; its full sequence is Putative UDP-N-acetylglucosamine--dolichyl-phosphate N-acetylglucosaminephosphotransferase (328 aa).

9 consecutive transmembrane segments (helical) span residues 1–21 (MLVS…VTLI), 48–68 (VPVL…FTFL), 78–98 (IENV…LGLL), 107–127 (ATRA…SVGH), 129–149 (IISI…IIIL), 166–186 (LNGL…YIGL), 192–212 (SFYA…FLIF), 228–248 (FIGS…ALFF), and 301–321 (YHIV…AVVF).

Belongs to the glycosyltransferase 4 family.

The protein localises to the cell membrane. The catalysed reaction is a di-trans,poly-cis-dolichyl phosphate + UDP-N-acetyl-alpha-D-glucosamine = an N-acetyl-alpha-D-glucosaminyl-diphospho-di-trans,poly-cis-dolichol + UMP. With respect to regulation, inhibited by tunicamycin. The sequence is that of Putative UDP-N-acetylglucosamine--dolichyl-phosphate N-acetylglucosaminephosphotransferase (gnpTA) from Sulfolobus acidocaldarius (strain ATCC 33909 / DSM 639 / JCM 8929 / NBRC 15157 / NCIMB 11770).